The chain runs to 501 residues: MAQALPWLLLWMGSGVLPAHGSQPGIRLPLRSGLGGAPLGLRLPRETDEESEEPGRRGSFVEMVDNLRGKSGQGYYVEMTLGSPPQTLNILVDTGSSNFAVGAAPHPFLHRYYQRQLSSTYRDLRKGVYVPYTQGKWEGELGTDLVSIPHGPNVTVRANIAAITESDKFFINGSNWEGILGLAYAEIARPDDSLEPFFDSLVKQTHVPNLFSLQLCGAGFPLNQSEALASVGGSMIIGGIDHSLYMGSLWYTPIRREWYYEVIIVRVEINGQDLKMDCKEYNYDKSIVDSGTTNLRLPKKVFEAAVKSIKAASSTEKFPDGFWLGEQLVCWQAGTTPWNIFPVISLYLMGEVTNQSFRITILPQQYLRPVEDVATSQDDCYKFAISQSSTGTVMGAVIMEGFYVVFDRARKRIGFAVSACHVHDEFRTAAVEGPFVTPDMEDCGYNIPQTDESTLMTIAYVMAAICALFMLPLCLMVCQWRCLRCLRHQHDDFADDISLLK.

The N-terminal stretch at 1-21 is a signal peptide; the sequence is MAQALPWLLLWMGSGVLPAHG. The propeptide occupies 22–45; that stretch reads SQPGIRLPLRSGLGGAPLGLRLPR. The Extracellular portion of the chain corresponds to 22–457; it reads SQPGIRLPLR…PQTDESTLMT (436 aa). The segment at 39–58 is disordered; sequence LGLRLPRETDEESEEPGRRG. Residues 75 to 416 enclose the Peptidase A1 domain; that stretch reads YYVEMTLGSP…DRARKRIGFA (342 aa). D93 is an active-site residue. Residue K126 is modified to N6-acetyllysine. N-linked (GlcNAc...) asparagine glycosylation is found at N153, N172, and N223. Cystine bridges form between C216/C420, C278/C443, and C330/C380. K275, K279, and K285 each carry N6-acetyllysine. Residue D289 is part of the active site. N6-acetyllysine occurs at positions 299, 300, and 307. N-linked (GlcNAc...) asparagine glycosylation is present at N354. The chain crosses the membrane as a helical span at residues 458 to 478; that stretch reads IAYVMAAICALFMLPLCLMVC. S-palmitoyl cysteine attachment occurs at residues C474, C478, C482, and C485. Topologically, residues 479-501 are cytoplasmic; the sequence is QWRCLRCLRHQHDDFADDISLLK. The segment at 479–501 is interaction with RTN3; that stretch reads QWRCLRCLRHQHDDFADDISLLK. The DXXLL motif lies at 496-500; the sequence is DISLL. Phosphoserine is present on S498. K501 is covalently cross-linked (Glycyl lysine isopeptide (Lys-Gly) (interchain with G-Cter in ubiquitin)).

Belongs to the peptidase A1 family. Monomer. Interacts (via DXXLL motif) with GGA1, GGA2 and GGA3 (via their VHS domain); the interaction highly increases when BACE1 is phosphorylated at Ser-498. Interacts with RTN1; RTN2; RTN3 and RTN4; the interaction leads to inhibition of amyloid precursor protein processing. Interacts with SNX6. Interacts with PCSK9. Interacts with NAT8 and NAT8B. Interacts with BIN1. Interacts (via extracellular domain) with ADAM10 (via extracellular domain). Interacts with SORL1; this interaction may affect binding with APP and hence reduce APP cleavage. Interacts with NRDC AND NRG1. Palmitoylation mediates lipid raft localization. Post-translationally, acetylated in the endoplasmic reticulum at Lys-126, Lys-275, Lys-279, Lys-285, Lys-299, Lys-300 and Lys-307. Acetylation by NAT8 and NAT8B is transient and deacetylation probably occurs in the Golgi. Acetylation regulates the maturation, the transport to the plasma membrane, the stability and the expression of the protein. In terms of processing, ubiquitinated at Lys-501, ubiquitination leads to lysosomal degradation. Monoubiquitinated and 'Lys-63'-linked polyubitinated. Deubiquitnated by USP8; inhibits lysosomal degradation. Phosphorylation at Ser-498 is required for interaction with GGA1 and retrograded transport from endosomal compartments to the trans-Golgi network. Non-phosphorylated BACE1 enters a direct recycling route to the cell surface. Post-translationally, N-Glycosylated. Addition of a bisecting N-acetylglucosamine by MGAT3 blocks lysosomal targeting, further degradation and is required for maintaining stability under stress conditions.

It is found in the cell membrane. It localises to the golgi apparatus. Its subcellular location is the trans-Golgi network. The protein resides in the endoplasmic reticulum. The protein localises to the endosome. It is found in the cell surface. It localises to the cytoplasmic vesicle membrane. Its subcellular location is the membrane raft. The protein resides in the lysosome. The protein localises to the late endosome. It is found in the early endosome. It localises to the recycling endosome. Its subcellular location is the cell projection. The protein resides in the axon. The protein localises to the dendrite. The enzyme catalyses Broad endopeptidase specificity. Cleaves Glu-Val-Asn-Leu-|-Asp-Ala-Glu-Phe in the Swedish variant of Alzheimer's amyloid precursor protein.. With respect to regulation, inhibited by RTN3 and RTN4. Responsible for the proteolytic processing of the amyloid precursor protein (APP). Cleaves at the N-terminus of the A-beta peptide sequence, between residues 671 and 672 of APP, leads to the generation and extracellular release of beta-cleaved soluble APP, and a corresponding cell-associated C-terminal fragment which is later released by gamma-secretase. Cleaves CHL1. This chain is Beta-secretase 1 (BACE1), found in Bos taurus (Bovine).